A 231-amino-acid polypeptide reads, in one-letter code: Small ribosomal subunit protein uS3 (231 aa).

A KH type-2 domain is found at 39–107 (VREFLKEKLK…PAQINIAEVR (69 aa)).

It belongs to the universal ribosomal protein uS3 family. Part of the 30S ribosomal subunit. Forms a tight complex with proteins S10 and S14.

In terms of biological role, binds the lower part of the 30S subunit head. Binds mRNA in the 70S ribosome, positioning it for translation. The protein is Small ribosomal subunit protein uS3 of Colwellia psychrerythraea (strain 34H / ATCC BAA-681) (Vibrio psychroerythus).